A 317-amino-acid polypeptide reads, in one-letter code: Aspartate carbamoyltransferase catalytic subunit (317 aa).

Carbamoyl phosphate is bound by residues arginine 64 and threonine 65. Position 92 (lysine 92) interacts with L-aspartate. Residues arginine 114, histidine 142, and glutamine 145 each contribute to the carbamoyl phosphate site. L-aspartate is bound by residues arginine 176 and arginine 230. Carbamoyl phosphate contacts are provided by glycine 271 and proline 272.

It belongs to the aspartate/ornithine carbamoyltransferase superfamily. ATCase family. Heterododecamer (2C3:3R2) of six catalytic PyrB chains organized as two trimers (C3), and six regulatory PyrI chains organized as three dimers (R2).

It carries out the reaction carbamoyl phosphate + L-aspartate = N-carbamoyl-L-aspartate + phosphate + H(+). It participates in pyrimidine metabolism; UMP biosynthesis via de novo pathway; (S)-dihydroorotate from bicarbonate: step 2/3. Catalyzes the condensation of carbamoyl phosphate and aspartate to form carbamoyl aspartate and inorganic phosphate, the committed step in the de novo pyrimidine nucleotide biosynthesis pathway. This is Aspartate carbamoyltransferase catalytic subunit from Nitratidesulfovibrio vulgaris (strain ATCC 29579 / DSM 644 / CCUG 34227 / NCIMB 8303 / VKM B-1760 / Hildenborough) (Desulfovibrio vulgaris).